The chain runs to 213 residues: Ras-related protein Rab-39B (213 aa).

Ser17, Gly20, Lys21, Ser22, Cys23, Ser37, and Thr40 together coordinate GTP. Position 22 (Ser22) interacts with Mg(2+). Residues 35–43 (QVSDPTVGV) are switch-I. Thr40 and Asp64 together coordinate Mg(2+). Gly67, His123, Lys124, Asp126, Ala154, and Arg155 together coordinate GTP. The interval 67–83 (GQERFRSITRAYYRNSV) is switch-II. Ser201 carries the phosphoserine modification. Residues Cys211 and Cys213 are each lipidated (S-geranylgeranyl cysteine). Cys213 is modified (cysteine methyl ester).

It belongs to the small GTPase superfamily. Rab family. In terms of assembly, interacts (GDP-bound) with C9orf72; C9orf72 in complex with SMCR8 acts as a GEF for RAB39B. Interacts (in GTP-bound form) with PICK1 (via PDZ domain); a PICK1 homodimer may allow simultaneous association of RAB39B and GRIA2 to PICK1 which is involved in GRIA2 trafficking. Interacts with isoform c of RASSF1; the interaction is strong. Interacts with isoform a of RASSF1; the interaction is weak. Interacts with the DLG4/PSD-95. Interacts (GTP-bound) with HOPS complex components VPS39 and VPS41. The cofactor is Mg(2+). As to expression, specifically expressed in neuron and neuronal precursors in the brain. Expression is high in all regions of the brain with highest levels observed in the hippocampus.

It localises to the cell membrane. The protein localises to the cytoplasmic vesicle membrane. Its subcellular location is the golgi apparatus. The protein resides in the cytoplasmic vesicle. It is found in the autophagosome membrane. It localises to the autolysosome membrane. It carries out the reaction GTP + H2O = GDP + phosphate + H(+). Its activity is regulated as follows. Regulated by guanine nucleotide exchange factors (GEFs) including C9orf72-SMCR8 complex, which promote the exchange of bound GDP for free GTP. Regulated by GTPase activating proteins (GAPs) which increase the GTP hydrolysis activity. Inhibited by GDP dissociation inhibitors (GDIs). Its function is as follows. The small GTPases Rab are key regulators of intracellular membrane trafficking, from the formation of transport vesicles to their fusion with membranes. Rabs cycle between an inactive GDP-bound form and an active GTP-bound form that is able to recruit to membranes different sets of downstream effectors directly responsible for vesicle formation, movement, tethering and fusion. RAB39B is involved in autophagy and may function in autophagosome formation. Binds downstream effector PICK1 to ensure selectively GRIA2 exit from the endoplasmic reticulum to the Golgi and to regulate AMPAR composition at the post-synapses and thus synaptic transmission. May regulate the homeostasis of SNCA/alpha-synuclein. The polypeptide is Ras-related protein Rab-39B (Mus musculus (Mouse)).